Reading from the N-terminus, the 268-residue chain is Undecaprenyl-diphosphatase (268 aa).

Helical transmembrane passes span 11–33 (FLGL…LLLI), 46–66 (FEVL…SAKL), 84–104 (LGVL…HGFI), 107–127 (VLFE…FILL), 144–164 (YPLP…IPGV), 185–205 (AEFS…YDLF), 213–233 (FNDG…GVFV), and 246–266 (FALF…ALII).

The protein belongs to the UppP family.

It is found in the cell inner membrane. The catalysed reaction is di-trans,octa-cis-undecaprenyl diphosphate + H2O = di-trans,octa-cis-undecaprenyl phosphate + phosphate + H(+). Catalyzes the dephosphorylation of undecaprenyl diphosphate (UPP). Confers resistance to bacitracin. The polypeptide is Undecaprenyl-diphosphatase (Brucella suis (strain ATCC 23445 / NCTC 10510)).